The sequence spans 95 residues: Selenoprotein K (95 aa).

The chain crosses the membrane as a helical span at residues 20 to 42 (LSFLTDMFWGITDFIVMFFQSII). Residues 48–95 (RRGCQNSSSRTRFDDGRGPPGNPRRRMGRIDHNSGPNAPPMSGGGUGR) form a disordered region. Sec-93 is a non-standard amino acid (selenocysteine).

The protein belongs to the selenoprotein K family.

The protein resides in the endoplasmic reticulum membrane. It is found in the cell membrane. Functionally, required for Ca(2+) flux in immune cells and plays a role in T-cell proliferation and in T-cell and neutrophil migration. Involved in endoplasmic reticulum-associated degradation (ERAD) of soluble glycosylated proteins. Required for cell surface expression of CD36 and involved in macrophage uptake of low-density lipoprotein and in foam cell formation. Required for palmitoylation. This Xenopus tropicalis (Western clawed frog) protein is Selenoprotein K (selenok).